Consider the following 574-residue polypeptide: Septation ring formation regulator EzrA (574 aa).

Residues 1–7 (MSSGIIL) are Extracellular-facing. The chain crosses the membrane as a helical span at residues 8–26 (LLVAIVLLVIIAYVVGVVI). The Cytoplasmic segment spans residues 27–574 (RKRNDTLIAN…YEKTQERIRF (548 aa)). Coiled coils occupy residues 104-141 (VRAK…EEKN), 275-343 (LVSL…SAKY), and 473-525 (DIEA…VQKS).

The protein belongs to the EzrA family.

Its subcellular location is the cell membrane. Its function is as follows. Negative regulator of FtsZ ring formation; modulates the frequency and position of FtsZ ring formation. Inhibits FtsZ ring formation at polar sites. Interacts either with FtsZ or with one of its binding partners to promote depolymerization. In Streptococcus agalactiae serotype III (strain NEM316), this protein is Septation ring formation regulator EzrA.